A 314-amino-acid polypeptide reads, in one-letter code: MAAVERLTIATRASRLALWQAEHVRDLLRARYPACSVELLTLTTRGDQILDRTLSKVGGKGLFVKELETALLDGRADLAVHSLKDVPVDLHAPFELSCVLERADPRDAFVSNDYGSLADLPPGAAVGTSSLRRESQIRARYPHLVVKPLRGNLDTRLGKLDNGDYAAIVLAAAGLERLGLAARIRALLEPADSLPAAGQGALGIEILQGRADVRAMLAPLGDAATLACVTAERAVSRMLGGSCQVPLAAYARIDGDELALRALVAAPDGRRIVRAERRGPRDQAQAIGESAARDLLADGADAILAELLPTSPAP.

Cysteine 243 is modified (S-(dipyrrolylmethanemethyl)cysteine).

Belongs to the HMBS family. Monomer. The cofactor is dipyrromethane.

The catalysed reaction is 4 porphobilinogen + H2O = hydroxymethylbilane + 4 NH4(+). It functions in the pathway porphyrin-containing compound metabolism; protoporphyrin-IX biosynthesis; coproporphyrinogen-III from 5-aminolevulinate: step 2/4. Functionally, tetrapolymerization of the monopyrrole PBG into the hydroxymethylbilane pre-uroporphyrinogen in several discrete steps. This is Porphobilinogen deaminase from Bordetella bronchiseptica (strain ATCC BAA-588 / NCTC 13252 / RB50) (Alcaligenes bronchisepticus).